Reading from the N-terminus, the 92-residue chain is Small ribosomal subunit protein uS19 (92 aa).

This sequence belongs to the universal ribosomal protein uS19 family.

Protein S19 forms a complex with S13 that binds strongly to the 16S ribosomal RNA. This Chromobacterium violaceum (strain ATCC 12472 / DSM 30191 / JCM 1249 / CCUG 213 / NBRC 12614 / NCIMB 9131 / NCTC 9757 / MK) protein is Small ribosomal subunit protein uS19.